Consider the following 360-residue polypeptide: Methyltransferase pvhD (360 aa).

S-adenosyl-L-methionine-binding positions include 201–202 (SG), Asp227, 251–252 (DL), Arg267, and Arg268.

It belongs to the class I-like SAM-binding methyltransferase superfamily. Cation-independent O-methyltransferase family.

It functions in the pathway secondary metabolite biosynthesis. Its function is as follows. Methyltransferase; part of the gene cluster that mediates the biosynthesis of varicidin A, an antifungal natural product containing a cis-octahydrodecalin core. The PKS module of pvhA together with the enoylreductase pvhC catalyze the formation of the polyketide unit which is then conjugated to L-isoleucine by the condensation domain of the NRPS module. Activity of the Dieckmann cyclase domain (RED) of pvhA results in release of an acyclic tetramate. The cytochrome P450 monooxygenase pvhE then catalyzes the oxidation of the C21 methyl group to a to carboxylate group. The methyltransferase pvhD then further methylates the pvhE product. The Diels-Alderase pvhB is able to catalyze Diels-Alder cycloaddition using both pvhE and pvhD products as substrates to form the decalin ring, yielding varicidin B and A, respectively. The chain is Methyltransferase pvhD from Talaromyces variabilis (Penicillium variabile).